The following is a 563-amino-acid chain: MAEAAYTVASDSENTGEEKSSSSPSLPEIALGIDIGTSQCSIAVWNGSQVHILRNTRNQKLIKSFVTFKDEVPAGGVSNQLAHEQEMLTGAAIFNMKRLVGRVDTDPVVHASKNLPFLVQTLDIGVRPFIAALVNNAWRSTTPEEVLAIFLVELRLMAEAQLKRPVRNVVLTVPVSFSRFQLTRFERACAMAGLHVLRLMPEPTAIALLYAQQQQMTTHDNMGSGSERLAVIFNMGAGYCDVAVTATAGGVSQIKALAGSPIGGEDILQNTIRHIAPPNEEASGLLRVAAQDAIHRLTDQENVQIEVDLGNGNKISKVLDRLEFEEVNQKVFEECERLVVQCLRDARVNGGDIDDLIMVGGCSYIPKVRTIIKNVCKKDEIYKGVNPLEAAVRGAALEGAVTSGIHDPFGSLDLLTIQATPLAVGVRANGNKFIPVIPRNTMVPARKDLFFTTVQDNQKEALIIIYEGEGETVEENHLLGYFKLVGIPPAPKGVPEINVCMDIDASNALRVFAAVLMPGSSSPVVPVIEVRMPTVDDGHGWCAQALNVKYGATLDLITLQRKM.

A disordered region spans residues 1–25 (MAEAAYTVASDSENTGEEKSSSSPS). A2 is modified (N-acetylalanine).

Belongs to the heat shock protein 70 (TC 1.A.33) family. DnaK subfamily.

Its function is as follows. In cooperation with other chaperones, Hsp70s are key components that facilitate folding of de novo synthesized proteins, assist translocation of precursor proteins into organelles, and are responsible for degradation of damaged protein under stress conditions. In Arabidopsis thaliana (Mouse-ear cress), this protein is Heat shock 70 kDa protein 8 (HSP70-8).